A 219-amino-acid polypeptide reads, in one-letter code: N-(5'-phosphoribosyl)anthranilate isomerase (219 aa).

Belongs to the TrpF family.

It carries out the reaction N-(5-phospho-beta-D-ribosyl)anthranilate = 1-(2-carboxyphenylamino)-1-deoxy-D-ribulose 5-phosphate. It functions in the pathway amino-acid biosynthesis; L-tryptophan biosynthesis; L-tryptophan from chorismate: step 3/5. The chain is N-(5'-phosphoribosyl)anthranilate isomerase from Mesorhizobium japonicum (strain LMG 29417 / CECT 9101 / MAFF 303099) (Mesorhizobium loti (strain MAFF 303099)).